We begin with the raw amino-acid sequence, 79 residues long: Small ribosomal subunit protein uS17 (79 aa).

This sequence belongs to the universal ribosomal protein uS17 family. As to quaternary structure, part of the 30S ribosomal subunit.

Functionally, one of the primary rRNA binding proteins, it binds specifically to the 5'-end of 16S ribosomal RNA. This Rhizobium etli (strain ATCC 51251 / DSM 11541 / JCM 21823 / NBRC 15573 / CFN 42) protein is Small ribosomal subunit protein uS17.